The chain runs to 883 residues: DNA double-strand break repair Rad50 ATPase (883 aa).

ATP is bound by residues arginine 12, 32-38 (NGSGKSS), and glutamine 134. The stretch at 218-420 (ELRGELGGLE…EIGSRRGELK (203 aa)) forms a coiled coil. A Zinc-hook domain is found at 395–492 (IQKARERKEE…ELVEVEKTLK (98 aa)). Zn(2+) is bound by residues cysteine 440 and cysteine 443. Coiled-coil stretches lie at residues 452–585 (RKEL…KKLG) and 620–741 (EDLL…LLKE). Position 790–795 (790–795 (FLSGGE)) interacts with ATP.

Belongs to the SMC family. RAD50 subfamily. In terms of assembly, homodimer. Forms a heterotetramer composed of two Mre11 subunits and two Rad50 subunits. Requires Zn(2+) as cofactor.

Part of the Rad50/Mre11 complex, which is involved in the early steps of DNA double-strand break (DSB) repair. The complex may facilitate opening of the processed DNA ends to aid in the recruitment of HerA and NurA. Rad50 controls the balance between DNA end bridging and DNA resection via ATP-dependent structural rearrangements of the Rad50/Mre11 complex. The polypeptide is DNA double-strand break repair Rad50 ATPase (Thermococcus kodakarensis (strain ATCC BAA-918 / JCM 12380 / KOD1) (Pyrococcus kodakaraensis (strain KOD1))).